Here is a 348-residue protein sequence, read N- to C-terminus: D-alanine--D-alanine ligase (348 aa).

Positions 132–334 (KRVLESIGIP…YPDLIEELVT (203 aa)) constitute an ATP-grasp domain. An ATP-binding site is contributed by 162-217 (LARLTFPIFVKPANMGSSVGISKAQTKVELRKAIQLALTYDSRVLIEQGVVAREIE). Mg(2+) is bound by residues Asp-288, Glu-301, and Asn-303.

The protein belongs to the D-alanine--D-alanine ligase family. The cofactor is Mg(2+). Requires Mn(2+) as cofactor.

It localises to the cytoplasm. It catalyses the reaction 2 D-alanine + ATP = D-alanyl-D-alanine + ADP + phosphate + H(+). The protein operates within cell wall biogenesis; peptidoglycan biosynthesis. Functionally, cell wall formation. This chain is D-alanine--D-alanine ligase, found in Streptococcus pyogenes serotype M12 (strain MGAS2096).